We begin with the raw amino-acid sequence, 258 residues long: Regulatory protein RecX (258 aa).

The protein belongs to the RecX family.

It is found in the cytoplasm. In terms of biological role, modulates RecA activity. The chain is Regulatory protein RecX from Streptococcus equi subsp. zooepidemicus (strain MGCS10565).